A 237-amino-acid chain; its full sequence is Uridylate kinase (237 aa).

Residue 11 to 14 participates in ATP binding; it reads KLSG. Residue Gly-53 participates in UMP binding. Gly-54 and Arg-58 together coordinate ATP. UMP contacts are provided by residues Asp-73 and 134–141; that span reads TGNPFFTT. ATP is bound by residues Thr-161, Tyr-167, and Asp-170.

It belongs to the UMP kinase family. As to quaternary structure, homohexamer.

The protein localises to the cytoplasm. It catalyses the reaction UMP + ATP = UDP + ADP. Its pathway is pyrimidine metabolism; CTP biosynthesis via de novo pathway; UDP from UMP (UMPK route): step 1/1. Inhibited by UTP. Catalyzes the reversible phosphorylation of UMP to UDP. This chain is Uridylate kinase, found in Burkholderia thailandensis (strain ATCC 700388 / DSM 13276 / CCUG 48851 / CIP 106301 / E264).